The sequence spans 357 residues: Protein RecA (357 aa).

71 to 78 provides a ligand contact to ATP; sequence GPESSGKT.

The protein belongs to the RecA family.

It localises to the cytoplasm. Functionally, can catalyze the hydrolysis of ATP in the presence of single-stranded DNA, the ATP-dependent uptake of single-stranded DNA by duplex DNA, and the ATP-dependent hybridization of homologous single-stranded DNAs. It interacts with LexA causing its activation and leading to its autocatalytic cleavage. The chain is Protein RecA from Ehrlichia canis (strain Jake).